Consider the following 201-residue polypeptide: Glutathione peroxidase 1 (201 aa).

A Phosphoserine modification is found at Ser32. The active site involves Sec47. Sec47 is a non-standard amino acid (selenocysteine). 3 positions are modified to N6-acetyllysine; alternate: Lys86, Lys112, and Lys146. Lys86, Lys112, and Lys146 each carry N6-succinyllysine; alternate. Ser195 and Ser199 each carry phosphoserine.

This sequence belongs to the glutathione peroxidase family. As to quaternary structure, homotetramer. Interacts with MIEN1. Post-translationally, during periods of oxidative stress, Sec-47 may react with a superoxide radical, irreversibly lose hydroselenide and be converted to dehydroalanine.

The protein resides in the cytoplasm. It is found in the mitochondrion. The catalysed reaction is 2 glutathione + H2O2 = glutathione disulfide + 2 H2O. It carries out the reaction a hydroperoxy polyunsaturated fatty acid + 2 glutathione = a hydroxy polyunsaturated fatty acid + glutathione disulfide + H2O. The enzyme catalyses tert-butyl hydroperoxide + 2 glutathione = tert-butanol + glutathione disulfide + H2O. It catalyses the reaction cumene hydroperoxide + 2 glutathione = 2-phenylpropan-2-ol + glutathione disulfide + H2O. The catalysed reaction is (13S)-hydroperoxy-(9Z,11E)-octadecadienoate + 2 glutathione = (13S)-hydroxy-(9Z,11E)-octadecadienoate + glutathione disulfide + H2O. It carries out the reaction (9S)-hydroperoxy-(10E,12Z)-octadecadienoate + 2 glutathione = (9S)-hydroxy-(10E,12Z)-octadecadienoate + glutathione disulfide + H2O. The enzyme catalyses (5S)-hydroperoxy-(6E,8Z,11Z,14Z)-eicosatetraenoate + 2 glutathione = (5S)-hydroxy-(6E,8Z,11Z,14Z)-eicosatetraenoate + glutathione disulfide + H2O. It catalyses the reaction (12S)-hydroperoxy-(5Z,8Z,10E,14Z)-eicosatetraenoate + 2 glutathione = (12S)-hydroxy-(5Z,8Z,10E,14Z)-eicosatetraenoate + glutathione disulfide + H2O. The catalysed reaction is (12R)-hydroperoxy-(5Z,8Z,10E,14Z)-eicosatetraenoate + 2 glutathione = (12R)-hydroxy-(5Z,8Z,10E,14Z)-eicosatetraenoate + glutathione disulfide + H2O. It carries out the reaction (15S)-hydroperoxy-(5Z,8Z,11Z,13E)-eicosatetraenoate + 2 glutathione = (15S)-hydroxy-(5Z,8Z,11Z,13E)-eicosatetraenoate + glutathione disulfide + H2O. The enzyme catalyses (5S)-hydroperoxy-(6E,8Z,11Z,14Z,17Z)-eicosapentaenoate + 2 glutathione = (5S)-hydroxy-(6E,8Z,11Z,14Z,17Z)-eicosapentaenoate + glutathione disulfide + H2O. It catalyses the reaction (12S)-hydroperoxy-(5Z,8Z,10E,14Z,17Z)-eicosapentaenoate + 2 glutathione = (12S)-hydroxy-(5Z,8Z,10E,14Z,17Z)-eicosapentaenoate + glutathione disulfide + H2O. The catalysed reaction is (15S)-hydroperoxy-(5Z,8Z,11Z,13E,17Z)-eicosapentaenoate + 2 glutathione = (15S)-hydroxy-(5Z,8Z,11Z,13E,17Z)-eicosapentaenoate + glutathione disulfide + H2O. It carries out the reaction (15S)-hydroperoxy-(11Z,13E)-eicosadienoate + 2 glutathione = (15S)-hydroxy-(11Z,13E)-eicosadienoate + glutathione disulfide + H2O. The enzyme catalyses (17S)-hydroperoxy-(4Z,7Z,10Z,13Z,15E,19Z)-docosahexaenoate + 2 glutathione = (17S)-hydroxy-(4Z,7Z,10Z,13Z,15E,19Z)-docosahexaenoate + glutathione disulfide + H2O. Its function is as follows. Catalyzes the reduction of hydroperoxides in a glutathione-dependent manner thus regulating cellular redox homeostasis. Can reduce small soluble hydroperoxides such as H2O2, cumene hydroperoxide and tert-butyl hydroperoxide, as well as several fatty acid-derived hydroperoxides. In platelets catalyzes the reduction of 12-hydroperoxyeicosatetraenoic acid, the primary product of the arachidonate 12-lipoxygenase pathway. In Pan troglodytes (Chimpanzee), this protein is Glutathione peroxidase 1 (GPX1).